Reading from the N-terminus, the 152-residue chain is Endoribonuclease YbeY (152 aa).

The Zn(2+) site is built by His113, His117, and His123.

This sequence belongs to the endoribonuclease YbeY family. Zn(2+) is required as a cofactor.

The protein resides in the cytoplasm. Functionally, single strand-specific metallo-endoribonuclease involved in late-stage 70S ribosome quality control and in maturation of the 3' terminus of the 16S rRNA. The protein is Endoribonuclease YbeY of Wolbachia pipientis subsp. Culex pipiens (strain wPip).